Consider the following 210-residue polypeptide: Thymidylate kinase (210 aa).

Residue 10–17 (GPEGAGKS) participates in ATP binding.

It belongs to the thymidylate kinase family.

It catalyses the reaction dTMP + ATP = dTDP + ADP. In terms of biological role, phosphorylation of dTMP to form dTDP in both de novo and salvage pathways of dTTP synthesis. This chain is Thymidylate kinase, found in Ectopseudomonas mendocina (strain ymp) (Pseudomonas mendocina).